The following is a 264-amino-acid chain: O-methyltransferase resE (264 aa).

Residues Gln97 and His142 each coordinate S-adenosyl-L-methionine.

It belongs to the methyltransferase superfamily.

It carries out the reaction desmethylrestrictinol + S-adenosyl-L-methionine = restrictinol + S-adenosyl-L-homocysteine + H(+). Its pathway is antifungal biosynthesis. Its function is as follows. O-methyltransferase; part of the gene cluster that mediates the biosynthesis of the tetrahydropyranyl antifungal agent restricticin that acts as an inhibitor of CYP51 and blocks the ergosterol biosynthesis. Within the pathway, resE uses S-adenosylmethionine to methylate position C4 of desmethylrestrictinol to produce restrictinol. The highly reducing polyketide synthase resH, the short chain dehydrogenase resG, the cyclase resF, the FAD-dependent monooxygenase resA and the enoylreductase resD are required to generate the first stable intermediate desmethylrestrictinol. ResH with resD biosynthesize the first polyketide chain intermediate that is reduced by resG, followed by epoxidation by resA before 6-endo cyclization via epoxide opening by resF leads to desmethylrestrictinol. The methyltransferase resE then catalyzes the C4 O-methylation of desmethylrestrictinol to produce restrictinol, and the nonribosomal peptide synthetase resC catalyzes the C3 esterification of restrictinol with glycine that leads to restricticin. This chain is O-methyltransferase resE, found in Aspergillus sclerotiorum.